A 142-amino-acid polypeptide reads, in one-letter code: Protein archease (142 aa).

Ca(2+)-binding residues include Asp12 and Asp141.

This sequence belongs to the archease family.

Its function is as follows. Activates the tRNA-splicing ligase complex by facilitating the enzymatic turnover of catalytic subunit RtcB. Acts by promoting the guanylylation of RtcB, a key intermediate step in tRNA ligation. Can also alter the NTP specificity of RtcB such that ATP, dGTP or ITP is used efficiently. The protein is Protein archease of Thermococcus kodakarensis (strain ATCC BAA-918 / JCM 12380 / KOD1) (Pyrococcus kodakaraensis (strain KOD1)).